We begin with the raw amino-acid sequence, 72 residues long: Large ribosomal subunit protein uL29 (72 aa).

It belongs to the universal ribosomal protein uL29 family.

This Prochlorococcus marinus (strain MIT 9515) protein is Large ribosomal subunit protein uL29.